The sequence spans 125 residues: Secretion system apparatus protein SsaO (125 aa).

This chain is Secretion system apparatus protein SsaO (ssaO), found in Salmonella typhimurium (strain LT2 / SGSC1412 / ATCC 700720).